A 353-amino-acid polypeptide reads, in one-letter code: Inositol-tetrakisphosphate 1-kinase 3 (353 aa).

Residues 1–25 (MKLTDNEEITMNGTREMETTEQETS) are disordered. 1D-myo-inositol 1,3,4-trisphosphate-binding residues include lysine 50 and lysine 92. Arginine 127 and lysine 177 together coordinate ATP. The ATP-grasp domain occupies 138–350 (NLSDSNGRVG…QSQCKKRALA (213 aa)). 1D-myo-inositol 1,3,4-trisphosphate contacts are provided by histidine 188 and lysine 220. Residues 209–220 (QEFVNHGGVLFK) and serine 235 each bind ATP. Positions 300, 315, and 317 each coordinate Mg(2+). Asparagine 317 lines the 1D-myo-inositol 1,3,4-trisphosphate pocket.

Belongs to the ITPK1 family. As to quaternary structure, monomer. The cofactor is Mg(2+). As to expression, highly expressed in leaves and flowers, and at lower levels in roots, stems, cauline leaves and siliques.

It catalyses the reaction 1D-myo-inositol 3,4,5,6-tetrakisphosphate + ATP = 1D-myo-inositol 1,3,4,5,6-pentakisphosphate + ADP + H(+). The enzyme catalyses 1D-myo-inositol 1,3,4-trisphosphate + ATP = 1D-myo-inositol 1,3,4,5-tetrakisphosphate + ADP + H(+). It carries out the reaction 1D-myo-inositol 1,3,4-trisphosphate + ATP = 1D-myo-inositol 1,3,4,6-tetrakisphosphate + ADP + H(+). In terms of biological role, kinase that can phosphorylate various inositol polyphosphate such as Ins(3,4,5,6)P4 or Ins(1,3,4)P3. Phosphorylates Ins(3,4,5,6)P4 to form InsP5. This reaction is thought to have regulatory importance, since Ins(3,4,5,6)P4 is an inhibitor of plasma membrane Ca(2+)-activated Cl(-) channels, while Ins(1,3,4,5,6)P5 is not. Also phosphorylates Ins(1,3,4)P3 or a racemic mixture of Ins(1,4,6)P3 and Ins(3,4,6)P3 to form InsP4. Ins(1,3,4,6)P4 is an essential molecule in the hexakisphosphate (InsP6) pathway. This is Inositol-tetrakisphosphate 1-kinase 3 (ITPK3) from Arabidopsis thaliana (Mouse-ear cress).